The primary structure comprises 307 residues: Putative ankyrin repeat protein R229 (307 aa).

6 ANK repeats span residues 135-164 (ASRV…DINV), 165-194 (DNDK…NVHA), 196-224 (DDEA…NVNA), 226-254 (NDYA…NPMA), 256-284 (RYYP…SMVY), and 286-307 (SYAM…LLLD).

This is Putative ankyrin repeat protein R229 from Acanthamoeba polyphaga (Amoeba).